We begin with the raw amino-acid sequence, 571 residues long: Isocitrate dehydrogenase kinase/phosphatase (571 aa).

Residues 318–324 and Lys-339 contribute to the ATP site; that span reads APGVRGM. The active site involves Asp-374.

This sequence belongs to the AceK family.

It localises to the cytoplasm. It carries out the reaction L-seryl-[isocitrate dehydrogenase] + ATP = O-phospho-L-seryl-[isocitrate dehydrogenase] + ADP + H(+). Functionally, bifunctional enzyme which can phosphorylate or dephosphorylate isocitrate dehydrogenase (IDH) on a specific serine residue. This is a regulatory mechanism which enables bacteria to bypass the Krebs cycle via the glyoxylate shunt in response to the source of carbon. When bacteria are grown on glucose, IDH is fully active and unphosphorylated, but when grown on acetate or ethanol, the activity of IDH declines drastically concomitant with its phosphorylation. This chain is Isocitrate dehydrogenase kinase/phosphatase, found in Pseudomonas putida (strain ATCC 700007 / DSM 6899 / JCM 31910 / BCRC 17059 / LMG 24140 / F1).